Reading from the N-terminus, the 348-residue chain is NADH-ubiquinone oxidoreductase chain 2 (348 aa).

10 consecutive transmembrane segments (helical) span residues 3–23 (PTVLTIIISSMGLGTTLTFIG), 25–45 (HWLLVWMGLEINTLAIIPLMI), 59–79 (YFITQATASALLLFASVTNAW), 95–115 (ATLATAALALKIGLAPLHFWL), 149–171 (LNSNLLLLFGVTSTIVGGWGGLN), 178–198 (ILAYSSIANLGWMITILHYSP), 199–219 (SLTLLNLILYMFMTLTTFLLF), 242–262 (VIALMTLLSLGGLPPLSGFMP), 274–294 (SLIIPATIMALMALLSLFFYL), and 324–344 (LILLTSASISIFMLPMTPLIL).

This sequence belongs to the complex I subunit 2 family.

The protein resides in the mitochondrion inner membrane. It catalyses the reaction a ubiquinone + NADH + 5 H(+)(in) = a ubiquinol + NAD(+) + 4 H(+)(out). In terms of biological role, core subunit of the mitochondrial membrane respiratory chain NADH dehydrogenase (Complex I) that is believed to belong to the minimal assembly required for catalysis. Complex I functions in the transfer of electrons from NADH to the respiratory chain. The immediate electron acceptor for the enzyme is believed to be ubiquinone. The sequence is that of NADH-ubiquinone oxidoreductase chain 2 (MT-ND2) from Scyliorhinus canicula (Small-spotted catshark).